The primary structure comprises 119 residues: uncharacterized protein (119 aa).

Residues M1 to K29 adopt a coiled-coil conformation.

This is an uncharacterized protein from Acidianus sp. F28 (AFV-2).